The sequence spans 393 residues: Diphosphomevalonate decarboxylase (393 aa).

(R)-5-diphosphomevalonate-binding positions include 21 to 24 (YWGK), Arg-77, 156 to 161 (SGSACR), and Thr-212.

It belongs to the diphosphomevalonate decarboxylase family. As to quaternary structure, homodimer.

The protein resides in the cytoplasm. It localises to the nucleus. It carries out the reaction (R)-5-diphosphomevalonate + ATP = isopentenyl diphosphate + ADP + phosphate + CO2. The protein operates within isoprenoid biosynthesis; isopentenyl diphosphate biosynthesis via mevalonate pathway; isopentenyl diphosphate from (R)-mevalonate: step 3/3. In terms of biological role, diphosphomevalonate decarboxylase; part of the second module of ergosterol biosynthesis pathway that includes the middle steps of the pathway. Mvd1 converts diphosphomevalonate into isopentenyl diphosphate. The second module is carried out in the vacuole and involves the formation of farnesyl diphosphate, which is also an important intermediate in the biosynthesis of ubiquinone, dolichol, heme and prenylated proteins. Activity by the mevalonate kinase erg12 first converts mevalonate into 5-phosphomevalonate. 5-phosphomevalonate is then further converted to 5-diphosphomevalonate by the phosphomevalonate kinase erg8. The diphosphomevalonate decarboxylase mvd1 then produces isopentenyl diphosphate. The isopentenyl-diphosphate delta-isomerase idi1 then catalyzes the 1,3-allylic rearrangement of the homoallylic substrate isopentenyl (IPP) to its highly electrophilic allylic isomer, dimethylallyl diphosphate (DMAPP). Finally the farnesyl diphosphate synthase fps1 catalyzes the sequential condensation of isopentenyl pyrophosphate with dimethylallyl pyrophosphate, and then with the resultant geranylpyrophosphate to the ultimate product farnesyl pyrophosphate. The chain is Diphosphomevalonate decarboxylase (mvd1) from Schizosaccharomyces pombe (strain 972 / ATCC 24843) (Fission yeast).